Here is a 592-residue protein sequence, read N- to C-terminus: Cryptochrome-2 (592 aa).

A Photolyase/cryptochrome alpha/beta domain is found at 21 to 150; it reads ASSVHWFRKG…EVVTENSHTL (130 aa). Lysine 29 participates in a covalent cross-link: Glycyl lysine isopeptide (Lys-Gly) (interchain with G-Cter in ubiquitin). Phosphoserine is present on serine 89. Residues lysine 125 and lysine 241 each participate in a glycyl lysine isopeptide (Lys-Gly) (interchain with G-Cter in ubiquitin) cross-link. Serine 265 is modified (phosphoserine; by MAPK). Serine 270 is an FAD binding site. Serine 298 is modified (phosphoserine). Glutamine 307 contacts FAD. Residue lysine 347 forms a Glycyl lysine isopeptide (Lys-Gly) (interchain with G-Cter in ubiquitin) linkage. Residues histidine 373 and 405–407 contribute to the FAD site; that span reads DAD. The interval 389 to 488 is required for inhibition of CLOCK-BMAL1-mediated transcription; that stretch reads WVSWESGVRV…IIGVDYPRPI (100 aa). Glycyl lysine isopeptide (Lys-Gly) (interchain with G-Cter in ubiquitin) cross-links involve residues lysine 474 and lysine 503. Positions 532–592 are disordered; it reads VAEPGSSQAG…PTQEPASKDS (61 aa). Polar residues predominate over residues 536 to 547; the sequence is GSSQAGSISNTG. Residue serine 553 is modified to Phosphoserine; by GSK3-beta. A Phosphoserine; by DYRK1A and MAPK modification is found at serine 557. A compositionally biased stretch (polar residues) spans 582 to 592; that stretch reads MPTQEPASKDS.

The protein belongs to the DNA photolyase class-1 family. As to quaternary structure, component of the circadian core oscillator, which includes the CRY proteins, CLOCK or NPAS2, BMAL1 or BMAL2, CSNK1D and/or CSNK1E, TIMELESS, and the PER proteins. Interacts with TIMELESS. Interacts directly with PER1, PER2 and PER3; interaction with PER2 inhibits its ubiquitination and vice versa. Interacts with CLOCK-BMAL1. Interacts with BMAL1. Interacts with CLOCK. Interacts with NFIL3. Interacts with FBXL3 and FBXL21. FBXL3, PER2 and the cofactor FAD compete for overlapping binding sites. FBXL3 cannot bind CRY2 that interacts already with PER2 or that contains bound FAD. Interacts with PPP5C (via TPR repeats); the interaction down-regulates the PPP5C phosphatase activity on CSNK1E. Interacts with nuclear receptors AR and NR3C1/GR; the interaction is ligand dependent. Interacts with PRKDC. Interacts with CIART. Interacts with DDB1, USP7 and TARDBP. Interacts with HNF4A. Interacts with PPARA. Interacts with PPARG in a ligand-dependent manner. Interacts with PPARD (via domain NR LBD) in a ligand-dependent manner. Interacts with NR1I2 (via domain NR LBD) in a ligand-dependent manner. Interacts with NR1I3 and VDR in a ligand-dependent manner. Requires FAD as cofactor. It depends on (6R)-5,10-methylene-5,6,7,8-tetrahydrofolate as a cofactor. Post-translationally, phosphorylation on Ser-265 by MAPK is important for the inhibition of CLOCK-BMAL1-mediated transcriptional activity. Phosphorylation by CSKNE requires interaction with PER1 or PER2. Phosphorylated in a circadian manner at Ser-553 and Ser-557 in the suprachiasmatic nucleus (SCN) and liver. Phosphorylation at Ser-557 by DYRK1A promotes subsequent phosphorylation at Ser-553 by GSK3-beta: the two-step phosphorylation at the neighboring Ser residues leads to its proteasomal degradation. Ubiquitinated by the SCF(FBXL3) and SCF(FBXL21) complexes, regulating the balance between degradation and stabilization. The SCF(FBXL3) complex is mainly nuclear and mediates ubiquitination and subsequent degradation of CRY2. In contrast, cytoplasmic SCF(FBXL21) complex-mediated ubiquitination leads to stabilize CRY2 and counteract the activity of the SCF(FBXL3) complex. The SCF(FBXL3) and SCF(FBXL21) complexes probably mediate ubiquitination at different Lys residues. The SCF(FBXL3) complex recognizes and binds CRY2 phosphorylated at Ser-553 and Ser-557. Ubiquitination may be inhibited by PER2. Deubiquitinated by USP7. As to expression, expression in the retina is restricted to the photoreceptor layer (at protein level). Expressed in all tissues examined including heart, brain, spleen, lung, liver, skeletal muscle, kidney and testis. Weak expression in spleen.

Its subcellular location is the cytoplasm. It localises to the nucleus. With respect to regulation, KL001 (N-[3-(9H-carbazol-9-yl)-2-hydroxypropyl]-N-(2-furanylmethyl)-methanesulfonamide) binds to CRY1 and stabilizes it by inhibiting FBXL3- and ubiquitin-dependent degradation of CRY1 resulting in lengthening of the circadian periods. KL001-mediated CRY1 stabilization can inhibit glucagon-induced gluconeogenesis in primary hepatocytes. Transcriptional repressor which forms a core component of the circadian clock. The circadian clock, an internal time-keeping system, regulates various physiological processes through the generation of approximately 24 hour circadian rhythms in gene expression, which are translated into rhythms in metabolism and behavior. It is derived from the Latin roots 'circa' (about) and 'diem' (day) and acts as an important regulator of a wide array of physiological functions including metabolism, sleep, body temperature, blood pressure, endocrine, immune, cardiovascular, and renal function. Consists of two major components: the central clock, residing in the suprachiasmatic nucleus (SCN) of the brain, and the peripheral clocks that are present in nearly every tissue and organ system. Both the central and peripheral clocks can be reset by environmental cues, also known as Zeitgebers (German for 'timegivers'). The predominant Zeitgeber for the central clock is light, which is sensed by retina and signals directly to the SCN. The central clock entrains the peripheral clocks through neuronal and hormonal signals, body temperature and feeding-related cues, aligning all clocks with the external light/dark cycle. Circadian rhythms allow an organism to achieve temporal homeostasis with its environment at the molecular level by regulating gene expression to create a peak of protein expression once every 24 hours to control when a particular physiological process is most active with respect to the solar day. Transcription and translation of core clock components (CLOCK, NPAS2, BMAL1, BMAL2, PER1, PER2, PER3, CRY1 and CRY2) plays a critical role in rhythm generation, whereas delays imposed by post-translational modifications (PTMs) are important for determining the period (tau) of the rhythms (tau refers to the period of a rhythm and is the length, in time, of one complete cycle). A diurnal rhythm is synchronized with the day/night cycle, while the ultradian and infradian rhythms have a period shorter and longer than 24 hours, respectively. Disruptions in the circadian rhythms contribute to the pathology of cardiovascular diseases, cancer, metabolic syndromes and aging. A transcription/translation feedback loop (TTFL) forms the core of the molecular circadian clock mechanism. Transcription factors, CLOCK or NPAS2 and BMAL1 or BMAL2, form the positive limb of the feedback loop, act in the form of a heterodimer and activate the transcription of core clock genes and clock-controlled genes (involved in key metabolic processes), harboring E-box elements (5'-CACGTG-3') within their promoters. The core clock genes: PER1/2/3 and CRY1/2 which are transcriptional repressors form the negative limb of the feedback loop and interact with the CLOCK|NPAS2-BMAL1|BMAL2 heterodimer inhibiting its activity and thereby negatively regulating their own expression. This heterodimer also activates nuclear receptors NR1D1/2 and RORA/B/G, which form a second feedback loop and which activate and repress BMAL1 transcription, respectively. CRY1 and CRY2 have redundant functions but also differential and selective contributions at least in defining the pace of the SCN circadian clock and its circadian transcriptional outputs. Less potent transcriptional repressor in cerebellum and liver than CRY1, though less effective in lengthening the period of the SCN oscillator. Seems to play a critical role in tuning SCN circadian period by opposing the action of CRY1. With CRY1, dispensable for circadian rhythm generation but necessary for the development of intercellular networks for rhythm synchrony. May mediate circadian regulation of cAMP signaling and gluconeogenesis by blocking glucagon-mediated increases in intracellular cAMP concentrations and in CREB1 phosphorylation. Besides its role in the maintenance of the circadian clock, is also involved in the regulation of other processes. Plays a key role in glucose and lipid metabolism modulation, in part, through the transcriptional regulation of genes involved in these pathways, such as LEP or ACSL4. Represses glucocorticoid receptor NR3C1/GR-induced transcriptional activity by binding to glucocorticoid response elements (GREs). Represses the CLOCK-BMAL1 induced transcription of BHLHE40/DEC1 and NAMPT. Represses PPARD and its target genes in the skeletal muscle and limits exercise capacity. Represses the transcriptional activity of NR1I2. This is Cryptochrome-2 (Cry2) from Mus musculus (Mouse).